The chain runs to 430 residues: Adenylosuccinate synthetase (430 aa).

Residues 13 to 19 (GDEGKGK) and 41 to 43 (GHT) each bind GTP. The active-site Proton acceptor is the Asp14. Positions 14 and 41 each coordinate Mg(2+). IMP-binding positions include 14–17 (DEGK), 39–42 (NAGH), Thr130, Arg144, Gln225, Thr240, and Arg304. His42 serves as the catalytic Proton donor. 300 to 306 (ASTGRPR) is a substrate binding site. GTP is bound by residues Arg306, 332–334 (KLD), and 414–416 (STG).

This sequence belongs to the adenylosuccinate synthetase family. Homodimer. The cofactor is Mg(2+).

The protein resides in the cytoplasm. It catalyses the reaction IMP + L-aspartate + GTP = N(6)-(1,2-dicarboxyethyl)-AMP + GDP + phosphate + 2 H(+). It functions in the pathway purine metabolism; AMP biosynthesis via de novo pathway; AMP from IMP: step 1/2. Its function is as follows. Plays an important role in the de novo pathway of purine nucleotide biosynthesis. Catalyzes the first committed step in the biosynthesis of AMP from IMP. The chain is Adenylosuccinate synthetase from Xanthomonas oryzae pv. oryzae (strain MAFF 311018).